The primary structure comprises 167 residues: Small ribosomal subunit protein uS5 (167 aa).

The region spanning 12–75 (LQEKLVAVNR…EKARRNIVSV (64 aa)) is the S5 DRBM domain.

The protein belongs to the universal ribosomal protein uS5 family. In terms of assembly, part of the 30S ribosomal subunit. Contacts proteins S4 and S8.

Functionally, with S4 and S12 plays an important role in translational accuracy. Located at the back of the 30S subunit body where it stabilizes the conformation of the head with respect to the body. This is Small ribosomal subunit protein uS5 from Shewanella loihica (strain ATCC BAA-1088 / PV-4).